Consider the following 74-residue polypeptide: Conotoxin AbVII (74 aa).

Residues 1–17 (VLIIAVLFLTACQLTTA) form the signal peptide. Residues 18-40 (ETSSRGKQKHRALRSTDKNSRMT) constitute a propeptide that is removed on maturation. Residues 19 to 41 (TSSRGKQKHRALRSTDKNSRMTK) are disordered. 3 disulfide bridges follow: C43-C57, C50-C61, and C56-C68.

It belongs to the conotoxin O1 superfamily. As to expression, expressed by the venom duct.

The protein localises to the secreted. This Conus abbreviatus (Abbreviated cone) protein is Conotoxin AbVII.